Consider the following 343-residue polypeptide: Protein RecA (343 aa).

64-71 (GPESSGKT) contacts ATP.

This sequence belongs to the RecA family.

The protein localises to the cytoplasm. Its function is as follows. Can catalyze the hydrolysis of ATP in the presence of single-stranded DNA, the ATP-dependent uptake of single-stranded DNA by duplex DNA, and the ATP-dependent hybridization of homologous single-stranded DNAs. It interacts with LexA causing its activation and leading to its autocatalytic cleavage. The protein is Protein RecA of Cereibacter sphaeroides (strain ATCC 17023 / DSM 158 / JCM 6121 / CCUG 31486 / LMG 2827 / NBRC 12203 / NCIMB 8253 / ATH 2.4.1.) (Rhodobacter sphaeroides).